Here is a 225-residue protein sequence, read N- to C-terminus: Methyl-CpG-binding domain-containing protein 6 (225 aa).

The disordered stretch occupies residues 25 to 92 (GDGTLDSSAK…PGWRVEDKIR (68 aa)). Residues 71-146 (RKRAAPGDNW…ENTYFNPDHF (76 aa)) form the MBD domain.

In terms of assembly, homodimer and heterodimer with MBD5. Interacts with DDM1 via its MBD domain. Interacts with NTF2, RPS2C, HDA6 and AGO4. In terms of tissue distribution, expressed in rosette leaves, buds, flowers, stems, mature seeds and roots.

It localises to the nucleus. It is found in the chromosome. Its subcellular location is the nucleolus. Functionally, transcriptional regulator that binds CpG, CpNpN and CpNpG (N is A, T, or C) islands in promoters regardless the DNA methylation status. Plays probably a role in gene silencing. May associate with histone deacetylase proteins (HDAC). Required for nucleolar dominance that consist in the silencing of rRNA genes inherited from one progenitor in genetic hybrids. Recruited to rRNA genes in a DRM2-dependent manner. Maintains gene silencing by interacting with RNA binding proteins (e.g. NTF2, RPS2C, HDA6 and AGO4) and by regulating DNA methylation status. The chain is Methyl-CpG-binding domain-containing protein 6 from Arabidopsis thaliana (Mouse-ear cress).